Here is a 326-residue protein sequence, read N- to C-terminus: DNA-binding death effector domain-containing protein 2 (326 aa).

Residues 25–104 (SLHRMFEVVG…RHDLLPHLAR (80 aa)) enclose the DED domain. The Nuclear localization signal signature appears at 104–109 (RKRRRP). The interval 104–194 (RKRRRPVSPE…PARPSSEGKV (91 aa)) is disordered. Over residues 136 to 146 (SSSSANSQQGQ) the composition is skewed to low complexity. Positions 155–173 (KRQRRSRGRPSGGARRRRR) match the Bipartite nuclear localization signal motif. Basic residues predominate over residues 155 to 174 (KRQRRSRGRPSGGARRRRRG). Residues 175–191 (APAAPQQQSEPARPSSE) show a composition bias toward low complexity.

As to quaternary structure, interacts with CASP8, CASP10 and GTF3C3. Homodimerizes and heterodimerizes with DEDD. In terms of tissue distribution, expressed in most tissues. High levels were found in liver, kidney, heart, ovary, spleen, testes, skeletal muscle and peripheral blood leukocytes. Expression was absent or low in colon and small intestine. Expression is relatively high in the tumor cell lines chronic myologenous leukemia K-562 and the colorectal adenocarcinoma SW480. Expression is moderate in the cervical carcinoma HeLa, the Burkitt's lymphoma Raji, the lung carcinoma A-549, and the melanoma G-361. In contrast, two leukemia cell lines, HL-60 (promyelocytic leukemia) and MOLT-4 (lymphoblastic leukemia), show relatively low levels.

The protein resides in the nucleus. The protein localises to the nucleolus. In terms of biological role, may play a critical role in death receptor-induced apoptosis and may target CASP8 and CASP10 to the nucleus. May regulate degradation of intermediate filaments during apoptosis. May play a role in the general transcription machinery in the nucleus and might be an important regulator of the activity of GTF3C3. The protein is DNA-binding death effector domain-containing protein 2 (DEDD2) of Homo sapiens (Human).